We begin with the raw amino-acid sequence, 134 residues long: Arsenate reductase (134 aa).

Residues Cys-11, Cys-83, and Cys-90 each act as nucleophile in the active site. Disulfide bonds link Cys-11–Cys-83 and Cys-83–Cys-90.

This sequence belongs to the low molecular weight phosphotyrosine protein phosphatase family. Thioredoxin-coupled ArsC subfamily.

The protein resides in the cytoplasm. The catalysed reaction is arsenate + [thioredoxin]-dithiol + H(+) = arsenite + [thioredoxin]-disulfide + H2O. Its function is as follows. Catalyzes the reduction of arsenate [As(V)] to arsenite [As(III)]. In Bacillus cereus (strain G9842), this protein is Arsenate reductase.